Consider the following 459-residue polypeptide: Cyclic GMP-AMP synthase-like receptor 2 (459 aa).

ATP contacts are provided by residues Ser-68 and 79 to 81; that span reads EFD. Mg(2+) is bound by residues Glu-79, Asp-81, and Asp-199. GTP contacts are provided by residues Asp-199 and 248-255; that span reads RSSFYAVE. An ATP-binding site is contributed by 252–255; the sequence is YAVE. Zn(2+) is bound at residue His-263. ATP contacts are provided by residues Lys-274 and 288–292; that span reads SYYIK.

This sequence belongs to the mab-21 family. The cofactor is Mg(2+). Requires Mn(2+) as cofactor.

It carries out the reaction GTP + ATP = 3',2'-cGAMP + 2 diphosphate. It catalyses the reaction GTP + ATP = 2',3'-cGAMP + 2 diphosphate. The enzyme catalyses GTP + ATP = pppGp(2'-5')A + diphosphate. The catalysed reaction is pppA(2'-5')pG = 3',2'-cGAMP + diphosphate. It carries out the reaction pppGp(2'-5')A = 2',3'-cGAMP + diphosphate. With respect to regulation, the enzyme activity is specifically activated by some nucleic acid. Functionally, nucleotidyltransferase that catalyzes the formation of cyclic GMP-AMP from ATP and GTP and plays a key role in antiviral innate immunity. Directly binds some unknown nucleic acid, activating the nucleotidyltransferase activity, leading to synthesis of both 3',2'-cGAMP and 2',3'-cGAMP second messengers. 3',2'-cGAMP and 2',3'-cGAMP bind to and activate Sting, thereby triggering the antiviral immune response via activation of the NF-kappa-B transcription factor Rel (Relish). In Drosophila melanogaster (Fruit fly), this protein is Cyclic GMP-AMP synthase-like receptor 2.